The sequence spans 200 residues: FSQKYIELVVVADHGMFTKYNGNLNTIRTRVHEIVNTLNGFYRSLNVRVSLTELEIWSNQDLINVQSAAADTLKTFGEWRERVLLNRISHDNAQLLTAIDLADNTIGIAYTGGMCYPKNSVGIVQDHSPKTLLIAVTMAHELGHNLGMKHDENHCHCSASFCIMPPSISEGPSYEFSDCSKDYYQMFLTKRKPQCILNKP.

In terms of domain architecture, Peptidase M12B spans 4–200 (KYIELVVVAD…RKPQCILNKP (197 aa)). Ca(2+)-binding residues include E7 and D91. Intrachain disulfides connect C115/C195, C155/C179, and C157/C162. Position 140 (H140) interacts with Zn(2+). E141 is an active-site residue. The Zn(2+) site is built by H144 and H150. Residues C195 and N198 each coordinate Ca(2+).

In terms of assembly, monomer. The cofactor is Zn(2+). In terms of tissue distribution, expressed by the venom gland.

The protein resides in the secreted. Its function is as follows. Snake venom zinc metalloproteinase that induces hemorrhage. The chain is Snake venom metalloproteinase rhomb-I from Lachesis muta rhombeata (Bushmaster).